A 91-amino-acid polypeptide reads, in one-letter code: uncharacterized protein (91 aa).

This is an uncharacterized protein from Acidianus convivator (ABV).